Here is a 201-residue protein sequence, read N- to C-terminus: Small ribosomal subunit protein uS4c (201 aa).

Positions 14–43 are disordered; sequence RLGALPGLTSKRPRAGSDLRNQSRPGKKSQ. Residues 89 to 169 form the S4 RNA-binding domain; it reads MRLDNILFRL…LPKHLTFHTL (81 aa).

It belongs to the universal ribosomal protein uS4 family. In terms of assembly, part of the 30S ribosomal subunit. Contacts protein S5. The interaction surface between S4 and S5 is involved in control of translational fidelity.

It localises to the plastid. Its subcellular location is the chloroplast. Its function is as follows. One of the primary rRNA binding proteins, it binds directly to 16S rRNA where it nucleates assembly of the body of the 30S subunit. In terms of biological role, with S5 and S12 plays an important role in translational accuracy. In Gossypium hirsutum (Upland cotton), this protein is Small ribosomal subunit protein uS4c (rps4).